The following is a 423-amino-acid chain: Serine--tRNA ligase (423 aa).

231-233 (TGE) lines the L-serine pocket. 262 to 264 (RQE) serves as a coordination point for ATP. Residue Glu285 coordinates L-serine. Residue 349 to 352 (EISS) participates in ATP binding. Ser385 is an L-serine binding site.

It belongs to the class-II aminoacyl-tRNA synthetase family. Type-1 seryl-tRNA synthetase subfamily. As to quaternary structure, homodimer. The tRNA molecule binds across the dimer.

The protein localises to the cytoplasm. The catalysed reaction is tRNA(Ser) + L-serine + ATP = L-seryl-tRNA(Ser) + AMP + diphosphate + H(+). It carries out the reaction tRNA(Sec) + L-serine + ATP = L-seryl-tRNA(Sec) + AMP + diphosphate + H(+). The protein operates within aminoacyl-tRNA biosynthesis; selenocysteinyl-tRNA(Sec) biosynthesis; L-seryl-tRNA(Sec) from L-serine and tRNA(Sec): step 1/1. In terms of biological role, catalyzes the attachment of serine to tRNA(Ser). Is also able to aminoacylate tRNA(Sec) with serine, to form the misacylated tRNA L-seryl-tRNA(Sec), which will be further converted into selenocysteinyl-tRNA(Sec). The protein is Serine--tRNA ligase of Phytoplasma mali (strain AT).